The following is a 962-amino-acid chain: Protease 3 (962 aa).

Positions 1 to 23 (MPRSTWFKALLLLVALWAPLSQA) are cleaved as a signal peptide. His88 lines the Zn(2+) pocket. Glu91 (proton acceptor) is an active-site residue. His92 and Glu169 together coordinate Zn(2+).

The protein belongs to the peptidase M16 family. Monomer. Requires Zn(2+) as cofactor.

It is found in the periplasm. It carries out the reaction Preferential cleavage of 16-Tyr-|-Leu-17 and 25-Phe-|-Tyr-26 bonds of oxidized insulin B chain. Also acts on other substrates of Mw less than 7 kDa such as insulin and glucagon.. In terms of biological role, endopeptidase that degrades small peptides of less than 7 kDa, such as glucagon and insulin. This chain is Protease 3 (ptrA), found in Escherichia coli (strain K12).